The chain runs to 316 residues: tRNA dimethylallyltransferase (316 aa).

15–22 (GPTASGKS) contacts ATP. 17–22 (TASGKS) contacts substrate. An interaction with substrate tRNA region spans residues 40 to 43 (DSRQ).

This sequence belongs to the IPP transferase family. Monomer. The cofactor is Mg(2+).

The catalysed reaction is adenosine(37) in tRNA + dimethylallyl diphosphate = N(6)-dimethylallyladenosine(37) in tRNA + diphosphate. Catalyzes the transfer of a dimethylallyl group onto the adenine at position 37 in tRNAs that read codons beginning with uridine, leading to the formation of N6-(dimethylallyl)adenosine (i(6)A). This chain is tRNA dimethylallyltransferase, found in Chlorobium limicola (strain DSM 245 / NBRC 103803 / 6330).